Consider the following 127-residue polypeptide: Large ribosomal subunit protein bL12 (127 aa).

The protein belongs to the bacterial ribosomal protein bL12 family. As to quaternary structure, homodimer. Part of the ribosomal stalk of the 50S ribosomal subunit. Forms a multimeric L10(L12)X complex, where L10 forms an elongated spine to which 2 to 4 L12 dimers bind in a sequential fashion. Binds GTP-bound translation factors.

Forms part of the ribosomal stalk which helps the ribosome interact with GTP-bound translation factors. Is thus essential for accurate translation. The protein is Large ribosomal subunit protein bL12 of Streptomyces virginiae (Streptomyces cinnamonensis).